The sequence spans 85 residues: Alpha-mammal toxin AaH2 (85 aa).

The N-terminal stretch at 1–19 (MNYLVMISLALLFVTGVES) is a signal peptide. The 63-residue stretch at 21–83 (KDGYIVDDVN…VRTKGPGRCH (63 aa)) folds into the LCN-type CS-alpha/beta domain. 4 cysteine pairs are disulfide-bonded: Cys31–Cys82, Cys35–Cys55, Cys41–Cys65, and Cys45–Cys67. Position 83 is a histidine amide (His83).

It belongs to the long (4 C-C) scorpion toxin superfamily. Sodium channel inhibitor family. Alpha subfamily. In terms of processing, the amidation of His-83 is not necessary for toxicity. In terms of tissue distribution, expressed by the venom gland.

Its subcellular location is the secreted. Alpha toxin that binds voltage-independently at site-3 of sodium channels (Nav), inhibits the inactivation of the activated channels, and weakly inhibits activation, thereby blocking neuronal transmission. Inserts into voltage-sensing domain IV to stabilize a deactivated state, thereby preventing fast-inactivation. Principally slows the inactivation process of TTX-sensitive sodium channels. It is active on mammalian brain Nav1.2/SCN2A (EC(50)human=0.72 nM, EC(50)rat=2.6 nM), on rat skeletal muscle Nav1.4/SCN4A (EC(50)=2.2 nM), and on human neuronal Nav1.7/SCN9A (EC(50)=6.8-51.7 nM). In vivo, intraplantar injection into mice induces spontaneous pain responses. The protein is Alpha-mammal toxin AaH2 of Androctonus australis (Sahara scorpion).